The chain runs to 835 residues: Peptide transporter family 1 (835 aa).

11 helical membrane-spanning segments follow: residues 86–106, 113–133, 150–170, 183–203, 222–242, 325–345, 368–388, 401–421, 697–717, 738–758, and 765–785; these read IFFNGFTVLCYTTPLLGSIVA, FWTIFSVSILYAIGQVVLALA, GLLIIAFGTGGIKPCVSAFGG, LFFSMFYFSINAGSMISTFIS, FGIPAILMIVATLVFMGGSFW, MFLPVPMFWALYDQQGSVWLI, LNAVLILLFIPLFQVIIYPVA, VTGGLLASLAFLITGFVQLQV, ILWQIPQIVVITAAEILFSIT, WLLTTAAGDSIIVVITILNLF, and FFVYAAAMFVVIAIFALLSIF. The tract at residues 814–835 is disordered; that stretch reads PRYSIDNKGFHPDEKDTFDMHF. Basic and acidic residues predominate over residues 821–835; sequence KGFHPDEKDTFDMHF.

This sequence belongs to the major facilitator superfamily. Proton-dependent oligopeptide transporter (POT/PTR) (TC 2.A.17) family. In terms of tissue distribution, expressed specifically in the intestine.

It is found in the apical cell membrane. Its function is as follows. Low-affinity peptide transporter that is necessary for proton-dependent uptake of di- or tripeptides, and to a minor extent tetrapeptides, in the intestine. Transport is independent of sodium and chloride ions. Controls the uptake of dietary fatty acids, plays a role in fatty acid synthesis and is responsible for dipeptide-induced acidification of the intestine. Regulates cellular pH differences together with the antiporter protein, nhx-2. Amino acid uptake and absorption levels influence the insulin signaling/daf-2 and let-363/TOR pathways, subsequently affecting the stress response and longevity of the organism. It is required for the uptake of the L-enantiomers of various amino acids, including L-glutamate. In response to the availability of amino acid nutrients, may play a role in promoting reproduction and fertility. In Caenorhabditis elegans, this protein is Peptide transporter family 1.